Reading from the N-terminus, the 144-residue chain is Large-conductance mechanosensitive channel (144 aa).

2 helical membrane passes run 21–41 (VGII…ANVI) and 76–96 (GIFL…FCII). A disordered region spans residues 105 to 144 (QRGGKTRRAVQTECGRDAAYRDPRSLETTKQRHGAGYNDD). Positions 118 to 134 (CGRDAAYRDPRSLETTK) are enriched in basic and acidic residues.

Belongs to the MscL family. Homopentamer.

Its subcellular location is the cell inner membrane. Its function is as follows. Channel that opens in response to stretch forces in the membrane lipid bilayer. May participate in the regulation of osmotic pressure changes within the cell. This is Large-conductance mechanosensitive channel from Sodalis glossinidius (strain morsitans).